Consider the following 303-residue polypeptide: MSFSSLPTEIQSLLFLTFLTIYLVTLMGNCLIILVTLADPMLHSPMYFFLRNLSFLEIGFNLVIVPKMLGTLLAQDTTISFLGCATQMYFFFFFGVAECFLLATMAYDRYVAICSPLHYPVIMNQRTRAKLAAASWFPGFPVATVQTTWLFSFPFCGTNKVNHFFCDSPPVLRLVCADTALFEIYAIVGTILVVMIPCLLILCSYTHIAAAILKIPSAKGKNKAFSTCSSHLLVVSLFYISLSLTYFRPKSNNSPEGKKLLSLSYTVMTPMLNPIIYSLRNNEVKNALSRTVSKALALRNCIP.

Residues 1 to 12 lie on the Extracellular side of the membrane; the sequence is MSFSSLPTEIQS. A helical membrane pass occupies residues 13–33; that stretch reads LLFLTFLTIYLVTLMGNCLII. At 34–41 the chain is on the cytoplasmic side; sequence LVTLADPM. A helical membrane pass occupies residues 42 to 62; the sequence is LHSPMYFFLRNLSFLEIGFNL. Residues 63–86 lie on the Extracellular side of the membrane; it reads VIVPKMLGTLLAQDTTISFLGCAT. The cysteines at positions 84 and 176 are disulfide-linked. The helical transmembrane segment at 87–107 threads the bilayer; sequence QMYFFFFFGVAECFLLATMAY. Over 108 to 126 the chain is Cytoplasmic; it reads DRYVAICSPLHYPVIMNQR. A helical transmembrane segment spans residues 127–147; that stretch reads TRAKLAAASWFPGFPVATVQT. Residues 148 to 184 lie on the Extracellular side of the membrane; sequence TWLFSFPFCGTNKVNHFFCDSPPVLRLVCADTALFEI. Residues 185 to 204 form a helical membrane-spanning segment; that stretch reads YAIVGTILVVMIPCLLILCS. Topologically, residues 205–224 are cytoplasmic; the sequence is YTHIAAAILKIPSAKGKNKA. Residues 225-245 form a helical membrane-spanning segment; it reads FSTCSSHLLVVSLFYISLSLT. Residues 246 to 258 are Extracellular-facing; it reads YFRPKSNNSPEGK. Residues 259–279 traverse the membrane as a helical segment; it reads KLLSLSYTVMTPMLNPIIYSL. The Cytoplasmic segment spans residues 280–301; it reads RNNEVKNALSRTVSKALALRNC.

This sequence belongs to the G-protein coupled receptor 1 family.

The protein localises to the cell membrane. Its function is as follows. Odorant receptor. In Homo sapiens (Human), this protein is Olfactory receptor 10A2 (OR10A2).